The chain runs to 414 residues: MAMVVSTWRDPQDEVPGSQGSQASQAPPVPGPPPGAPHTPQTPGQGGPASTPAQTAAGGQGGPGGPGSDKQQQQQHIECVVCGDKSSGKHYGQFTCEGCKSFFKRSVRRNLSYTCRANRNCPIDQHHRNQCQYCRLKKCLKVGMRREAVQRGRMPPTQPSHGQFALTNGDPLNCHSYLSGYISLLLRAEPYPTSRFGSQCMQPNNIMGIENICELAARMLFSAVEWARNIPFFPDLQITDQVALLRLTWSELFVLNAAQCSMPLHVAPLLAAAGLHASPMSADRVVAFMDHIRIFQEQVEKLKALHVDSAEYSCLKAIVLFTSDACGLSDVAHVESLQEKSQCALEEYVRSQYPNQPTRFGKLLLRLPSLRTVSSSVIEQLFFVRLVGKTPIETLIRDMLLSGSSFNWPYMAIQ.

The segment at methionine 1–glutamine 72 is disordered. Over residues proline 27 to proline 37 the composition is skewed to pro residues. Low complexity predominate over residues histidine 38 to alanine 57. The residue at position 51 (threonine 51) is a Phosphothreonine. The span at glycine 58 to glycine 67 shows a compositional bias: gly residues. Positions histidine 76–arginine 151 form a DNA-binding region, nuclear receptor. 2 consecutive NR C4-type zinc fingers follow at residues cysteine 79–cysteine 99 and cysteine 115–cysteine 139. The tract at residues alanine 117–glutamine 414 is interaction with ZFPM2. Residues tyrosine 177 to glycine 403 form the NR LBD domain. Residues leucine 337 to glutamine 414 form an important for dimerization region.

Belongs to the nuclear hormone receptor family. NR2 subfamily. As to quaternary structure, interacts with SQSTM1. Binds DNA as a dimer; homodimer or heterodimer with NR2F6. Interacts with NCOA1, NCOA2, NCOA3 and PPARGC1A. Interacts with ZFPM2.

It localises to the nucleus. Functionally, ligand-activated transcription factor. Activated by high concentrations of 9-cis-retinoic acid and all-trans-retinoic acid, but not by dexamethasone, cortisol or progesterone (in vitro). Regulation of the apolipoprotein A-I gene transcription. Binds to DNA site A. May be required to establish ovary identity during early gonad development. This Bos taurus (Bovine) protein is COUP transcription factor 2 (NR2F2).